A 340-amino-acid chain; its full sequence is MGEMEQLRQEAEQLKKQIADARKACADVTLAELVSGLEVVGRVQMRTRRTLRGHLAKIYAMHWATDSKLLVSASQDGKLIVWDSYTTNKVHAIPLRSSWVMTCAYAPSGNFVACGGLDNMCSIYNLKSREGNVKVSRELSAHTGYLSCCRFLDDNNIVTSSGDTTCALWDIETGQQKTVFVGHTGDCMSLAVSPDFNLFISGACDASAKLWDVREGTCRQTFTGHESDINAICFFPNGEAICTGSDDASCRLFDLRADQELICFSHESIICGITSVAFSLSGRLLFAGYDDFNCNVWDSMKSERVGILSGHDNRVSCLGVTADGMAVATGSWDSFLKIWN.

7 WD repeats span residues 53-83 (GHLA…IVWD), 95-125 (LRSS…SIYN), 141-170 (AHTG…ALWD), 182-212 (GHTG…KLWD), 224-254 (GHES…RLFD), 268-298 (SIIC…NVWD), and 310-340 (GHDN…KIWN).

Belongs to the WD repeat G protein beta family. In terms of assembly, g proteins are composed of 3 units, alpha, beta and gamma. Interacts with RASD2.

In terms of biological role, guanine nucleotide-binding proteins (G proteins) are involved as a modulator or transducer in various transmembrane signaling systems. The beta and gamma chains are required for the GTPase activity, for replacement of GDP by GTP, and for G protein-effector interaction. The polypeptide is Guanine nucleotide-binding protein G(I)/G(S)/G(T) subunit beta-3 (GNB3) (Homo sapiens (Human)).